The chain runs to 1293 residues: Late blight resistance protein R1-A (1293 aa).

2 coiled-coil regions span residues 423–446 (RYSD…ESLQ) and 538–560 (PRMN…KLLN). The NB-ARC domain occupies 539 to 826 (RMNEEIVGFE…SEAFIKSSEG (288 aa)). 572–579 (GMPGLGKT) is an ATP binding site. LRR repeat units lie at residues 876–899 (AEEN…VYSH), 956–981 (FKFL…VYLK), 1027–1049 (MVKL…LLEN), 1056–1079 (LETL…KTPN), 1102–1125 (PIRL…ISAP), 1149–1172 (LKHL…KVSN), 1175–1197 (FPQL…ADDA), 1198–1222 (FPNL…FMDI), and 1235–1259 (ESVV…NFKL).

Belongs to the disease resistance NB-LRR family.

Its subcellular location is the cytoplasm. The protein localises to the membrane. Functionally, confers resistance to late blight (Phytophthora infestans) races carrying the avirulence gene Avr1. Resistance proteins guard the plant against pathogens that contain an appropriate avirulence protein via an indirect interaction with this avirulence protein. That triggers a defense system including the hypersensitive response, which restricts the pathogen growth. The chain is Late blight resistance protein R1-A (R1A) from Solanum demissum (Wild potato).